The chain runs to 521 residues: Calcium-dependent protein kinase 33 (521 aa).

Glycine 2 is lipidated: N-myristoyl glycine. Residues 15–56 (PQQNGERSVEIENRRRSTHQDPSKISTGTNQPPPWRNPAKHS) are disordered. The segment covering 21–36 (RSVEIENRRRSTHQDP) has biased composition (basic and acidic residues). The 259-residue stretch at 73-331 (YTLSKELGRG…AAEVLKHPWL (259 aa)) folds into the Protein kinase domain. ATP-binding positions include 79–87 (LGRGQFGVT) and lysine 102. The active-site Proton acceptor is aspartate 197. Position 237 is a phosphoserine (serine 237). An autoinhibitory domain region spans residues 337 to 367 (ASDKPIDSAVLSRMKQFRAMNKLKKLALKVI). 4 EF-hand domains span residues 374-409 (EEIQ…LGSR), 410-445 (LTEA…RHRL), 446-481 (ESNE…YGMG), and 482-516 (DDAT…GNPQ). Residues aspartate 387, aspartate 389, serine 391, threonine 393, glutamate 398, aspartate 423, aspartate 425, asparagine 427, serine 429, glutamate 434, aspartate 459, aspartate 461, serine 463, tyrosine 465, glutamate 470, aspartate 494, aspartate 496, aspartate 498, arginine 500, and glutamate 505 each coordinate Ca(2+).

The protein belongs to the protein kinase superfamily. Ser/Thr protein kinase family. CDPK subfamily. Interacts with THI1. Interacts with FD and FDP. Autophosphorylated. In terms of tissue distribution, expressed in primary roots, leaves, inflorescences, siliques and guard cells. Expressed in the shoot apical meristem.

Its subcellular location is the cell membrane. The protein resides in the nucleus. It localises to the cytoplasm. The enzyme catalyses L-seryl-[protein] + ATP = O-phospho-L-seryl-[protein] + ADP + H(+). It catalyses the reaction L-threonyl-[protein] + ATP = O-phospho-L-threonyl-[protein] + ADP + H(+). Its activity is regulated as follows. Activated by calcium. Autophosphorylation may play an important role in the regulation of the kinase activity. Repressed by THI1 through a negative regulation of the autophosphorylation activity in the presence of Ca(2+). Its function is as follows. Ca(2+)-dependent protein kinase. Negative regulator of stomatal closure and slow anion currents. Unable to phosphorylate THI1 in vitro, but the kinase activity is essential for the stomatal closure regulation. Phosphorylates FD. May play a role in signal transduction pathways that involve calcium as a second messenger. The polypeptide is Calcium-dependent protein kinase 33 (Arabidopsis thaliana (Mouse-ear cress)).